Consider the following 336-residue polypeptide: Holliday junction branch migration complex subunit RuvB (336 aa).

The tract at residues 4 to 184 (ADRLISAGTT…FGIVQRLEFY (181 aa)) is large ATPase domain (RuvB-L). Residues I23, R24, G65, K68, T69, T70, 131-133 (EDY), R174, Y184, and R221 each bind ATP. T69 provides a ligand contact to Mg(2+). The segment at 185-255 (QVPDLQYIVS…IAAQALDMLN (71 aa)) is small ATPAse domain (RuvB-S). The interval 258–336 (AEGFDYMDRK…HFGITPPEMP (79 aa)) is head domain (RuvB-H). 3 residues coordinate DNA: R294, R313, and R318.

This sequence belongs to the RuvB family. Homohexamer. Forms an RuvA(8)-RuvB(12)-Holliday junction (HJ) complex. HJ DNA is sandwiched between 2 RuvA tetramers; dsDNA enters through RuvA and exits via RuvB. An RuvB hexamer assembles on each DNA strand where it exits the tetramer. Each RuvB hexamer is contacted by two RuvA subunits (via domain III) on 2 adjacent RuvB subunits; this complex drives branch migration. In the full resolvosome a probable DNA-RuvA(4)-RuvB(12)-RuvC(2) complex forms which resolves the HJ.

The protein resides in the cytoplasm. The catalysed reaction is ATP + H2O = ADP + phosphate + H(+). In terms of biological role, the RuvA-RuvB-RuvC complex processes Holliday junction (HJ) DNA during genetic recombination and DNA repair, while the RuvA-RuvB complex plays an important role in the rescue of blocked DNA replication forks via replication fork reversal (RFR). RuvA specifically binds to HJ cruciform DNA, conferring on it an open structure. The RuvB hexamer acts as an ATP-dependent pump, pulling dsDNA into and through the RuvAB complex. RuvB forms 2 homohexamers on either side of HJ DNA bound by 1 or 2 RuvA tetramers; 4 subunits per hexamer contact DNA at a time. Coordinated motions by a converter formed by DNA-disengaged RuvB subunits stimulates ATP hydrolysis and nucleotide exchange. Immobilization of the converter enables RuvB to convert the ATP-contained energy into a lever motion, pulling 2 nucleotides of DNA out of the RuvA tetramer per ATP hydrolyzed, thus driving DNA branch migration. The RuvB motors rotate together with the DNA substrate, which together with the progressing nucleotide cycle form the mechanistic basis for DNA recombination by continuous HJ branch migration. Branch migration allows RuvC to scan DNA until it finds its consensus sequence, where it cleaves and resolves cruciform DNA. In Escherichia coli O17:K52:H18 (strain UMN026 / ExPEC), this protein is Holliday junction branch migration complex subunit RuvB.